The primary structure comprises 142 residues: Large ribosomal subunit protein uL11 (142 aa).

This sequence belongs to the universal ribosomal protein uL11 family. Part of the ribosomal stalk of the 50S ribosomal subunit. Interacts with L10 and the large rRNA to form the base of the stalk. L10 forms an elongated spine to which L12 dimers bind in a sequential fashion forming a multimeric L10(L12)X complex. Post-translationally, one or more lysine residues are methylated.

Its function is as follows. Forms part of the ribosomal stalk which helps the ribosome interact with GTP-bound translation factors. This is Large ribosomal subunit protein uL11 from Alcanivorax borkumensis (strain ATCC 700651 / DSM 11573 / NCIMB 13689 / SK2).